Consider the following 202-residue polypeptide: Heat shock 22 kDa protein, mitochondrial (202 aa).

The transit peptide at 1 to 31 (MASSLALKRFLSSGLLSSSFLRPVASSASRS) directs the protein to the mitochondrion. The region spanning 94 to 202 (VLSAASRRGW…RNNVINVKVD (109 aa)) is the sHSP domain.

It belongs to the small heat shock protein (HSP20) family.

Its subcellular location is the mitochondrion. The polypeptide is Heat shock 22 kDa protein, mitochondrial (HSP22) (Pisum sativum (Garden pea)).